We begin with the raw amino-acid sequence, 741 residues long: Mitofusin-1 (741 aa).

Residues 1-584 are Cytoplasmic-facing; the sequence is MAEPVSPLKH…ASQEELMITL (584 aa). Residues 9–73 are part of a helix bundle domain, formed by helices from N-terminal and C-terminal regions; sequence KHFVLAKKAI…LSIIGEVLSR (65 aa). The 250-residue stretch at 72–321 folds into the Dynamin-type G domain; it reads SRRHMKVAFF…ARLQEFQNFE (250 aa). Positions 82-89 are G1 motif; the sequence is GRTSSGKS. 85 to 90 provides a ligand contact to GTP; that stretch reads SSGKSS. The interval 108–109 is G2 motif; it reads IT. Residues 178-181 are G3 motif; it reads DSPG. 237-240 is a GTP binding site; that stretch reads NRWD. Residues 237–240 are G4 motif; sequence NRWD. Position 266 (E266) is a region of interest, G5 motif. GTP contacts are provided by S284 and K286. Residues 338–364 are part of a helix bundle domain, formed by helices from N-terminal and C-terminal regions; sequence EQHTIRAKQILATVKNIMDSVNLAAED. Residues 371–408 adopt a coiled-coil conformation; that stretch reads EEREDQIDRLDFIRNQMNLLTLDVKKKIKEVTEEVANK. Residues 585 to 605 form a helical membrane-spanning segment; that stretch reads VTGLASVTSRTSMGIIIVGGV. Over 606–608 the chain is Mitochondrial intermembrane; the sequence is IWK. Residues 609–629 form a helical membrane-spanning segment; it reads TIGWKLLSVSLTMYGALYLYE. The Cytoplasmic segment spans residues 630-741; the sequence is RLSWTTHAKE…QFLPSSNEES (112 aa). Positions 679-734 form a coiled coil; it reads RLCQQVDITQKQLEEEIARLPKEIDQLEKIQNNSKLLRNKAVQLENELENFTKQFL. A part of a helix bundle domain, formed by helices from N-terminal and C-terminal regions region spans residues 703-734; that stretch reads DQLEKIQNNSKLLRNKAVQLENELENFTKQFL.

This sequence belongs to the TRAFAC class dynamin-like GTPase superfamily. Dynamin/Fzo/YdjA family. Mitofusin subfamily. In terms of assembly, homodimer, also in the absence of bound GTP. Forms higher oligomers in the presence of a transition state GTP analog. Forms homomultimers and heteromultimers with MFN2. Oligomerization is essential for mitochondrion fusion. Component of a high molecular weight multiprotein complex. Interacts with VAT1. Interacts with THG1L; THG1L probably functions as a guanyl-nucleotide exchange factor/GEF, activating MFN1. Post-translationally, ubiquitinated by non-degradative ubiquitin by PRKN. Deubiquitination by USP30 inhibits mitochondrial fusion. Ubiquitinated by MARCHF5. When mitochondria are depolarized and dysfunctional, it is ubiquitinated by a SCF (SKP1-CUL1-F-box protein) E3 ubiquitin-protein ligase complex that contains FBXO7 and PRKN. In terms of tissue distribution, detected in kidney and heart (at protein level). Ubiquitous. Expressed at slightly higher level in kidney and heart. Isoform 2 may be overexpressed in some tumors, such as lung cancers.

The protein resides in the mitochondrion outer membrane. It localises to the cytoplasm. It catalyses the reaction GTP + H2O = GDP + phosphate + H(+). Mitochondrial outer membrane GTPase that mediates mitochondrial clustering and fusion. Membrane clustering requires GTPase activity. It may involve a major rearrangement of the coiled coil domains. Mitochondria are highly dynamic organelles, and their morphology is determined by the equilibrium between mitochondrial fusion and fission events. Overexpression induces the formation of mitochondrial networks (in vitro). Has low GTPase activity. The chain is Mitofusin-1 (MFN1) from Homo sapiens (Human).